We begin with the raw amino-acid sequence, 251 residues long: Phosphate import ATP-binding protein PstB (251 aa).

In terms of domain architecture, ABC transporter spans 5 to 246 (FDIRNFSVYY…PEKELTEKYL (242 aa)). 37-44 (GPSGCGKS) provides a ligand contact to ATP.

The protein belongs to the ABC transporter superfamily. Phosphate importer (TC 3.A.1.7) family. The complex is composed of two ATP-binding proteins (PstB), two transmembrane proteins (PstC and PstA) and a solute-binding protein (PstS).

It localises to the cell membrane. It carries out the reaction phosphate(out) + ATP + H2O = ADP + 2 phosphate(in) + H(+). Its function is as follows. Part of the ABC transporter complex PstSACB involved in phosphate import. Responsible for energy coupling to the transport system. This chain is Phosphate import ATP-binding protein PstB, found in Archaeoglobus fulgidus (strain ATCC 49558 / DSM 4304 / JCM 9628 / NBRC 100126 / VC-16).